Consider the following 393-residue polypeptide: Methylthioribose kinase (393 aa).

Residues Asn38, Lys53, and 107 to 109 (EDL) each bind ATP. Asp225 contacts substrate. Position 242–244 (242–244 (DPE)) interacts with ATP. Arg332 contributes to the substrate binding site.

The protein belongs to the methylthioribose kinase family. In terms of assembly, homodimer.

It carries out the reaction 5-(methylsulfanyl)-D-ribose + ATP = 5-(methylsulfanyl)-alpha-D-ribose 1-phosphate + ADP + H(+). Its pathway is amino-acid biosynthesis; L-methionine biosynthesis via salvage pathway; S-methyl-5-thio-alpha-D-ribose 1-phosphate from S-methyl-5'-thioadenosine (hydrolase route): step 2/2. Functionally, catalyzes the phosphorylation of methylthioribose into methylthioribose-1-phosphate. This is Methylthioribose kinase from Bacillus cereus (strain ATCC 14579 / DSM 31 / CCUG 7414 / JCM 2152 / NBRC 15305 / NCIMB 9373 / NCTC 2599 / NRRL B-3711).